The chain runs to 652 residues: DNA ligase (652 aa).

NAD(+)-binding positions include 29-33 (DAEYD), 78-79 (SL), and Glu-107. The active-site N6-AMP-lysine intermediate is the Lys-109. The NAD(+) site is built by Arg-130, Glu-164, Lys-278, and Lys-302. Zn(2+)-binding residues include Cys-395, Cys-398, Cys-413, and Cys-418. The BRCT domain occupies 577 to 652 (DENAALSGMT…IKDEAWLESL (76 aa)).

Belongs to the NAD-dependent DNA ligase family. LigA subfamily. Mg(2+) is required as a cofactor. Requires Mn(2+) as cofactor.

The enzyme catalyses NAD(+) + (deoxyribonucleotide)n-3'-hydroxyl + 5'-phospho-(deoxyribonucleotide)m = (deoxyribonucleotide)n+m + AMP + beta-nicotinamide D-nucleotide.. In terms of biological role, DNA ligase that catalyzes the formation of phosphodiester linkages between 5'-phosphoryl and 3'-hydroxyl groups in double-stranded DNA using NAD as a coenzyme and as the energy source for the reaction. It is essential for DNA replication and repair of damaged DNA. This Streptococcus suis (strain 98HAH33) protein is DNA ligase.